A 555-amino-acid chain; its full sequence is Inositol 1,4,5-triphosphate receptor associated 2 (555 aa).

The Cytoplasmic portion of the chain corresponds to 1 to 495 (MESTPFSGVA…LKSSIRKANK (495 aa)). 2 disordered regions span residues 84 to 103 (SLPL…SSDP) and 128 to 147 (RSAS…DNIA). A Phosphothreonine modification is found at Thr-91. A compositionally biased stretch (low complexity) spans 91–102 (TSSTDGTITSSD). A compositionally biased stretch (polar residues) spans 129-142 (SASPTIEAQGTSPA). Positions 227 to 341 (TLEKRVKLEE…LEELKQVLLQ (115 aa)) form a coiled coil. A phosphoserine mark is found at Ser-363, Ser-370, and Ser-424. The segment at 437 to 469 (ELKTKDDSEPSGEETVERTRKPSLSEKKNNPSK) is disordered. The segment covering 451 to 465 (TVERTRKPSLSEKKN) has biased composition (basic and acidic residues). Residues 496–516 (ALWLSIAFIVLFAALMSFLTG) traverse the membrane as a helical; Anchor for type IV membrane protein segment. Over 517-555 (QLFQKSVDAAPTQQEDSWTSLEHILWPFTRLRHNGPPPV) the chain is Lumenal.

Belongs to the IRAG2 family. As to quaternary structure, interacts (via coiled-coil domain) with ITPR3. Interacts with SUN1 and SUN2. Interacts with microtubules. Interacts with HCN4; regulates HCN4 channel activity. In terms of processing, the removal of the C-terminal lumenal domain occurs by proteolytic processing. In terms of tissue distribution, expressed at high levels in pre B-cells, mature B-cells and pre T-cells. Expressed at low levels in mature T-cells and plasma B-cells. Expressed in germinal center B-cells, splenic marginal zone cells and B-cell lymphomas. Expressed in neuronal cells in the cerebral cortex, epithelial cells in tonsil, adrenal glands, zymogen-producing cells in the stomach and epithelial cells in seminal vesicles.

The protein localises to the cytoplasm. It localises to the endoplasmic reticulum membrane. Its subcellular location is the nucleus envelope. It is found in the cytoskeleton. The protein resides in the microtubule organizing center. The protein localises to the centrosome. It localises to the spindle pole. Its subcellular location is the chromosome. Plays a role in the delivery of peptides to major histocompatibility complex (MHC) class I molecules; this occurs in a transporter associated with antigen processing (TAP)-independent manner. May play a role in taste signal transduction via ITPR3. May play a role during fertilization in pronucleus congression and fusion. Plays a role in maintaining nuclear shape, maybe as a component of the LINC complex and through interaction with microtubules. Plays a role in the regulation of cellular excitability by regulating the hyperpolarization-activated cyclic nucleotide-gated HCN4 channel activity. This Homo sapiens (Human) protein is Inositol 1,4,5-triphosphate receptor associated 2.